A 231-amino-acid polypeptide reads, in one-letter code: Urease accessory protein UreF (231 aa).

This sequence belongs to the UreF family. In terms of assembly, ureD, UreF and UreG form a complex that acts as a GTP-hydrolysis-dependent molecular chaperone, activating the urease apoprotein by helping to assemble the nickel containing metallocenter of UreC. The UreE protein probably delivers the nickel.

It localises to the cytoplasm. Required for maturation of urease via the functional incorporation of the urease nickel metallocenter. In Magnetococcus marinus (strain ATCC BAA-1437 / JCM 17883 / MC-1), this protein is Urease accessory protein UreF.